Consider the following 247-residue polypeptide: Probable transcriptional regulatory protein Swit_2142 (247 aa).

Residues 1-14 show a composition bias toward basic residues; it reads MAGHSKFKNIMHRK. A disordered region spans residues 1-21; it reads MAGHSKFKNIMHRKGAQDKKR.

Belongs to the TACO1 family.

The protein localises to the cytoplasm. The chain is Probable transcriptional regulatory protein Swit_2142 from Rhizorhabdus wittichii (strain DSM 6014 / CCUG 31198 / JCM 15750 / NBRC 105917 / EY 4224 / RW1) (Sphingomonas wittichii).